A 1644-amino-acid polypeptide reads, in one-letter code: Terminal uridylyltransferase 4 (1644 aa).

3 disordered regions span residues N31–I63, C96–L168, and A205–Y257. Residues A36 to E46 show a composition bias toward basic and acidic residues. S104 is subject to Phosphoserine. Residues T112–Q125 are compositionally biased toward polar residues. Phosphoserine occurs at positions 134 and 156. The segment covering L206–T222 has biased composition (polar residues). Over residues D238–S252 the composition is skewed to basic and acidic residues. Positions S253–L333 are required for interaction with LIN28A and pre-let-7 RNA. 4 residues coordinate Zn(2+): C306, C309, H322, and H328. A disordered region spans residues E579 to S617. The segment covering S582 to T603 has biased composition (basic and acidic residues). In terms of domain architecture, PAP-associated 1 spans S628–S678. A disordered region spans residues G794 to Q816. Positions S806 to Q816 are enriched in basic and acidic residues. Positions D901–C1634 are sufficient for monouridylation activity. A CCHC-type 1 zinc finger spans residues I913 to E930. Residues S998 to N1001, S1008 to D1011, N1081, K1103, S1121 to I1125, and H1237 each bind UTP. D1009 and D1011 together coordinate Mg(2+). The region spanning S1184–H1237 is the PAP-associated 2 domain. A CCHC-type 2 zinc finger spans residues R1293–K1310. The interval K1321–T1348 is disordered. Residues K1334–T1348 are compositionally biased toward basic and acidic residues. A CCHC-type 3 zinc finger spans residues L1357–E1374. A compositionally biased stretch (low complexity) spans A1401–Y1426. The tract at residues A1401–A1482 is disordered. A compositionally biased stretch (polar residues) spans A1441–S1452. The segment covering Q1453–Q1470 has biased composition (low complexity). An Omega-N-methylarginine modification is found at R1624.

It belongs to the DNA polymerase type-B-like family. Interacts with LIN28A in the presence of pre-let-7 RNA. Interacts with T2BP. Interacts with MOV10; the interaction is RNA-dependent. Mg(2+) serves as cofactor. Requires Mn(2+) as cofactor.

The protein localises to the nucleus. It is found in the cytoplasm. The protein resides in the cytoplasmic ribonucleoprotein granule. It catalyses the reaction RNA(n) + UTP = RNA(n)-3'-uridine ribonucleotide + diphosphate. Uridylyltransferase that mediates the terminal uridylation of mRNAs with short (less than 25 nucleotides) poly(A) tails, hence facilitating global mRNA decay. Essential for both oocyte maturation and fertility. Through 3' terminal uridylation of mRNA, sculpts, with TUT7, the maternal transcriptome by eliminating transcripts during oocyte growth. Involved in microRNA (miRNA)-induced gene silencing through uridylation of deadenylated miRNA targets. Also functions as an integral regulator of microRNA biogenesis using 3 different uridylation mechanisms. Acts as a suppressor of miRNA biogenesis by mediating the terminal uridylation of some miRNA precursors, including that of let-7 (pre-let-7), miR107, miR-143 and miR-200c. Uridylated miRNAs are not processed by Dicer and undergo degradation. Degradation of pre-let-7 contributes to the maintenance of embryonic stem (ES) cell pluripotency. Also catalyzes the 3' uridylation of miR-26A, a miRNA that targets IL6 transcript. This abrogates the silencing of IL6 transcript, hence promoting cytokine expression. In the absence of LIN28A, TUT7 and TUT4 monouridylate group II pre-miRNAs, which includes most of pre-let7 members, that shapes an optimal 3' end overhang for efficient processing. Adds oligo-U tails to truncated pre-miRNAS with a 5' overhang which may promote rapid degradation of non-functional pre-miRNA species. May also suppress Toll-like receptor-induced NF-kappa-B activation via binding to T2BP. Does not play a role in replication-dependent histone mRNA degradation. Due to functional redundancy between TUT4 and TUT7, the identification of the specific role of each of these proteins is difficult. TUT4 and TUT7 restrict retrotransposition of long interspersed element-1 (LINE-1) in cooperation with MOV10 counteracting the RNA chaperonne activity of L1RE1. TUT7 uridylates LINE-1 mRNAs in the cytoplasm which inhibits initiation of reverse transcription once in the nucleus, whereas uridylation by TUT4 destabilizes mRNAs in cytoplasmic ribonucleoprotein granules. This chain is Terminal uridylyltransferase 4, found in Homo sapiens (Human).